Consider the following 65-residue polypeptide: Prokaryotic ubiquitin-like protein UBact (65 aa).

The segment covering methionine 1 to methionine 17 has biased composition (polar residues). A disordered region spans residues methionine 1 to glutamate 65. The span at lysine 35–glutamate 65 shows a compositional bias: basic and acidic residues. An Isoglutamyl lysine isopeptide (Glu-Lys) (interchain with K-? in acceptor proteins) cross-link involves residue glutamate 65.

The protein belongs to the ubiquitin-like protein UBact family.

Its function is as follows. May function as a protein modifier covalently attached to lysine residues of substrate proteins. This may serve to target the modified proteins for degradation by proteasomes. This chain is Prokaryotic ubiquitin-like protein UBact, found in Methylacidiphilum infernorum (isolate V4) (Methylokorus infernorum (strain V4)).